The sequence spans 380 residues: GPI-anchor transamidase (380 aa).

A signal peptide spans 1–19 (MIVQFVALLLLNLLQIIAA). Residues 20-354 (ESSHTNNWAV…TRELKYKKHP (335 aa)) are Lumenal-facing. Active-site residues include His145 and Cys187. An N-linked (GlcNAc...) asparagine glycan is attached at Asn307. A helical transmembrane segment spans residues 355–375 (ISRIISAVVCISFSIGFPYYA). Topologically, residues 376–380 (SKYLK) are cytoplasmic.

Belongs to the peptidase C13 family. As to quaternary structure, forms a complex with PIG-T homolog, PIG-U homolog and PIG-S homolog. The disulfide bond between PIGK/GPI8 and PIGT is important for normal enzyme activity.

The protein resides in the endoplasmic reticulum membrane. It participates in glycolipid biosynthesis; glycosylphosphatidylinositol-anchor biosynthesis. In terms of biological role, mediates GPI anchoring in the endoplasmic reticulum, by replacing a protein's C-terminal GPI attachment signal peptide with a pre-assembled GPI. During this transamidation reaction, the GPI transamidase forms a carbonyl intermediate with the substrate protein. The chain is GPI-anchor transamidase (gpi8) from Schizosaccharomyces pombe (strain 972 / ATCC 24843) (Fission yeast).